A 194-amino-acid chain; its full sequence is Holliday junction branch migration complex subunit RuvA (194 aa).

Residues 1-64 (MIGRLRGVLT…DDSAALYGFL (64 aa)) form a domain I region. Positions 65 to 140 (SESERRLFRH…RAADFNNGIS (76 aa)) are domain II. The flexible linker stretch occupies residues 140-144 (STSGK). Residues 145–194 (LNLDTVSEAALALQQLGYKPAEAARMARDAGTESDDVAIVIKKALQTVLR) form a domain III region.

Belongs to the RuvA family. As to quaternary structure, homotetramer. Forms an RuvA(8)-RuvB(12)-Holliday junction (HJ) complex. HJ DNA is sandwiched between 2 RuvA tetramers; dsDNA enters through RuvA and exits via RuvB. An RuvB hexamer assembles on each DNA strand where it exits the tetramer. Each RuvB hexamer is contacted by two RuvA subunits (via domain III) on 2 adjacent RuvB subunits; this complex drives branch migration. In the full resolvosome a probable DNA-RuvA(4)-RuvB(12)-RuvC(2) complex forms which resolves the HJ.

It localises to the cytoplasm. Its function is as follows. The RuvA-RuvB-RuvC complex processes Holliday junction (HJ) DNA during genetic recombination and DNA repair, while the RuvA-RuvB complex plays an important role in the rescue of blocked DNA replication forks via replication fork reversal (RFR). RuvA specifically binds to HJ cruciform DNA, conferring on it an open structure. The RuvB hexamer acts as an ATP-dependent pump, pulling dsDNA into and through the RuvAB complex. HJ branch migration allows RuvC to scan DNA until it finds its consensus sequence, where it cleaves and resolves the cruciform DNA. In Xylella fastidiosa (strain M23), this protein is Holliday junction branch migration complex subunit RuvA.